We begin with the raw amino-acid sequence, 198 residues long: Protein-L-isoaspartate O-methyltransferase (198 aa).

Serine 50 is a catalytic residue.

Belongs to the methyltransferase superfamily. L-isoaspartyl/D-aspartyl protein methyltransferase family.

It is found in the cytoplasm. The catalysed reaction is [protein]-L-isoaspartate + S-adenosyl-L-methionine = [protein]-L-isoaspartate alpha-methyl ester + S-adenosyl-L-homocysteine. In terms of biological role, catalyzes the methyl esterification of L-isoaspartyl residues in peptides and proteins that result from spontaneous decomposition of normal L-aspartyl and L-asparaginyl residues. It plays a role in the repair and/or degradation of damaged proteins. In Thermosipho melanesiensis (strain DSM 12029 / CIP 104789 / BI429), this protein is Protein-L-isoaspartate O-methyltransferase.